The chain runs to 438 residues: Ammonium transporter Rh type A (438 aa).

Residues 1–4 (MRFK) lie on the Cytoplasmic side of the membrane. A helical membrane pass occupies residues 5–25 (FPLMAISLEVAMIVLFGLFVE). Topologically, residues 26–61 (YETPQNASQKNASHQNASQQGNTSSSAKKDQFFQLY) are extracellular. Residues N31, N36, N41, and N47 are each glycosylated (N-linked (GlcNAc...) asparagine). A helical membrane pass occupies residues 62–82 (PLFQDVHVMIFVGFGFLMTFL). The Cytoplasmic segment spans residues 83–86 (KKYG). Residues 87–107 (FSGVGFNLFLAALGLQWGTIM) traverse the membrane as a helical segment. At 108 to 121 (QGLLHSHGKEFHFG) the chain is on the extracellular side. The chain crosses the membrane as a helical span at residues 122–142 (IYNMINADFSTATVLISFGAV). At 143–148 (LGKTSP) the chain is on the cytoplasmic side. A helical membrane pass occupies residues 149–169 (IQMLIMTILEIAVFAGNEYLV). The Extracellular portion of the chain corresponds to 170 to 178 (TELFEASDT). A helical transmembrane segment spans residues 179-199 (GASMTIHAFGAYFGLAVAGVL). Residues 200–218 (YRPGLRCEHPNDESVYHSD) lie on the Cytoplasmic side of the membrane. The chain crosses the membrane as a helical span at residues 219–239 (LFAMIGTLFLWIFWPSFNSAI). Residues 240-249 (ADPGDHQYRA) lie on the Extracellular side of the membrane. Residues 250-270 (IVNTYMSLAACVITAYALSSL) traverse the membrane as a helical segment. The Cytoplasmic segment spans residues 271–278 (VERRGRLD). Residues 279-296 (MVHIQNATLAGGVAVGTC) form a helical membrane-spanning segment. The Extracellular segment spans residues 297–300 (ADME). The helical transmembrane segment at 301 to 321 (IPLYAAMTIGSIAGIISVLGY) threads the bilayer. Over 322–342 (KFFSPLLANKLMIHDTCGVHN) the chain is Cytoplasmic. The helical transmembrane segment at 343 to 363 (LHGLPGVFGGLASIVAISWGM) threads the bilayer. Topologically, residues 364–372 (STASMAMQA) are extracellular. Residues 373 to 393 (AALGSSIGSAIVGGLLTGLIL) traverse the membrane as a helical segment. The Cytoplasmic portion of the chain corresponds to 394 to 438 (KLPIWNQPPDEYCYDDSVSWKVPKFRELDNRFFQHANHNHVEHEV).

Belongs to the ammonium transporter (TC 2.A.49) family. Rh subfamily. Homodimer. Heterotrimer; a RHCE monomer interacts with a RHAG homodimer. Component of the ankyrin-1 complex in the erythrocyte, composed of ANK1, RHCE, RHAG, SLC4A1, EPB42, GYPA, GYPB and AQP1. Interacts with GYPB (via the N-terminal); this interaction bridges the (RHAG)2(RHCE) heterotrimer with the SLC4A1 Band 3 I dimer complexed with GYPA. Glycosylated.

It is found in the membrane. The catalysed reaction is methylamine(out) = methylamine(in). It catalyses the reaction NH4(+)(in) = NH4(+)(out). It carries out the reaction CO2(out) = CO2(in). Its function is as follows. Component of the ankyrin-1 complex, a multiprotein complex involved in the stability and shape of the erythrocyte membrane. Heterotrimer with RHCE (RHAG)2(RHCE), that transports ammonium and its related derivative methylammonium, in both neutral and ionic forms, across the erythrocyte membrane. The transport of NH4(+) is electrogenic and masks the NH3 transport. Also, may act as a CO2 channel. Moreover in erythrocyte, regulates RHD membrane expression and is associated with rhesus blood group antigen expression. This Mus musculus (Mouse) protein is Ammonium transporter Rh type A.